We begin with the raw amino-acid sequence, 102 residues long: Large ribosomal subunit protein bL21 (102 aa).

It belongs to the bacterial ribosomal protein bL21 family. As to quaternary structure, part of the 50S ribosomal subunit. Contacts protein L20.

This protein binds to 23S rRNA in the presence of protein L20. The chain is Large ribosomal subunit protein bL21 from Ligilactobacillus salivarius (strain UCC118) (Lactobacillus salivarius).